Consider the following 960-residue polypeptide: MASQHSRRSREAPRPEMSIGRYTRLDEIGRGSFATVYQGVHTKSKTYVAIKSVNLSKLNKKLKENLSSEIDILKGLHHPHIVALIDCHESTSHIHLVMEYCALGDLSLFIKRRDTLGSHKYTRDMIAKYPNPPGGSLNEVVTRHFLKQLSSALKFLRDRNLIHRDIKPQNLLLCPSPSSYRSGHAQVMPYKGSDDSYEPTTGLESLPMLKIADFGFARSLPATSLAETLCGSPLYMAPEILRYEKYDAKADLWSVGTVLYEMVVGRPPFRATNHVELLRKIEKGEDRIRFPEDNPASDDIKKLIRGLLKRNPVERLNFPEFFSNNVINDPIPGLLADDAPGPPQSPRPRQLVGKAEESPYDTGPEDKLAYPPGQRPVTTHPKSGTPPTATDMRRMGSADRPAPAISKEQQPGGTPPQRPGPVSLATAPGRQELIDRNATTAAMDRQRHRNTYAGAPKASDSTIRAQEARDRAAQEVAFERDYVVVEKRAVEVNAFADELAHSPRLQGGLSRPGQTGAGSRRTTTQGLPTVSPSSPHANAAKAMQVVSGRARADSTHQRQHSYERRYGQSPTSATSAISKALNMASGRLFGMGFSPPLAITKGGRSPPLAYNPFPAYPPVHASLLITGDGSKPNATGDEDCKAVQEIEECATRSDVVFGFAEVKYKQLIPLAPSASTDPSARPMDTNVEPDSADSDDGLTVDAIVTLSEEALVLYVKALSLLAKSMDIAGAWWSRKNREEVYGESPTKDSMSAVAGTRINYVVQWVRSRFNEVIEKAEFVRLKLIEGQRRLPPDHPSHPDNHSISSTAGSSSTADVVVSPGVTAERLMYDRALEMSRAAAINELTGEDLANCEITYVTAIRMLEAVLEDDGMRSMPGSNIERQSSSQGGEKVVLDELQVEDRQVVVKLVSSMRGRLASVRKKVAVLAKRSSAPTPTAGSAGKTPTSNISPVTYATGVTPPR.

The Protein kinase domain maps to 22–327; it reads YTRLDEIGRG…FPEFFSNNVI (306 aa). Residues 28–36 and lysine 51 each bind ATP; that span reads IGRGSFATV. Aspartate 165 (proton acceptor) is an active-site residue. Disordered stretches follow at residues 333–467, 503–538, 550–571, 673–694, 789–815, and 926–960; these read GLLA…RAQE, PRLQ…PHAN, ARAD…QSPT, SAST…SADS, RLPP…TADV, and AKRS…TPPR. Polar residues-rich tracts occupy residues 376–388 and 520–536; these read PVTT…TPPT and RRTT…SSPH. Over residues 550 to 566 the composition is skewed to basic and acidic residues; it reads ARADSTHQRQHSYERRY. Residues 789 to 800 show a composition bias toward basic and acidic residues; it reads RLPPDHPSHPDN. Residues 801–815 show a composition bias toward low complexity; that stretch reads HSISSTAGSSSTADV. Residues 930–951 show a composition bias toward polar residues; sequence SAPTPTAGSAGKTPTSNISPVT.

Belongs to the protein kinase superfamily. Ser/Thr protein kinase family. APG1/unc-51/ULK1 subfamily. As to quaternary structure, homodimer. Forms a ternary complex with ATG13 and ATG17.

It is found in the cytoplasm. The protein resides in the preautophagosomal structure membrane. It catalyses the reaction L-seryl-[protein] + ATP = O-phospho-L-seryl-[protein] + ADP + H(+). The catalysed reaction is L-threonyl-[protein] + ATP = O-phospho-L-threonyl-[protein] + ADP + H(+). Its function is as follows. Serine/threonine protein kinase involved in the cytoplasm to vacuole transport (Cvt) and found to be essential in autophagy, where it is required for the formation of autophagosomes. Involved in the clearance of protein aggregates which cannot be efficiently cleared by the proteasome. Required for selective autophagic degradation of the nucleus (nucleophagy) as well as for mitophagy which contributes to regulate mitochondrial quantity and quality by eliminating the mitochondria to a basal level to fulfill cellular energy requirements and preventing excess ROS production. Also involved in endoplasmic reticulum-specific autophagic process, in selective removal of ER-associated degradation (ERAD) substrates. Plays a key role in ATG9 and ATG23 cycling through the pre-autophagosomal structure and is necessary to promote ATG18 binding to ATG9 through phosphorylation of ATG9. Catalyzes phosphorylation of ATG4, decreasing the interaction between ATG4 and ATG8 and impairing deconjugation of PE-conjugated forms of ATG8. The protein is Serine/threonine-protein kinase atg1 of Penicillium rubens (strain ATCC 28089 / DSM 1075 / NRRL 1951 / Wisconsin 54-1255) (Penicillium chrysogenum).